Here is a 612-residue protein sequence, read N- to C-terminus: MTDKEKRLERQSRIRNFSIIAHIDHGKSTLADRILEKTAAITQREMKEQLLDSMDLERERGITIKLNSVQLKYKAKDGEEYIMHLIDTPGHVDFTYEVSRSLAACEGAILVVDAAQGIEAQTLANVYLALDNNLEILPIINKIDLPSAEPERVRGEIEDVIGLDASEAVLTSAKAGIGIEDILEQIVEKVPAPAGDPEAPLQALIFDSLYDAYRGVIAYIRIVEGTVKPGQKIKMMATGKEFEVLEVGVFTPKAMPTDELTVGDVGYLTAAIKNVGDTRVGDTITSAVNPAQEALPGYRKLNPMVYCGLYPIDTAKYNDLREALEKLELNDSSLQYEAETSQALGFGFRCGFLGMLHMEIIQERIEREFKIDLITTAPSVIYDVYMTDGEKIVVDNPSNLPDPQKIERIEEPYVKATMMVPNDYVGSVMELCQGKRGHFIDMQYLDANRVSIVYEIPLAEIVYEFFDQLKSNTKGYASFDYELIGYRPSTLVKMDIMLNGEKIDALSFIVHRDYAYERGKIIVDKLKELIPRQHFEVPIQAAIGQKIVARSTIKAMRKNVLAKCYGGDISRKRKLLEKQKEGKKRMKQVGSVEVPQEAFMAVLKMDDSTPKK.

Residues 12 to 194 enclose the tr-type G domain; sequence SRIRNFSIIA…QIVEKVPAPA (183 aa). Residues 24 to 29 and 141 to 144 each bind GTP; these read DHGKST and NKID.

The protein belongs to the TRAFAC class translation factor GTPase superfamily. Classic translation factor GTPase family. LepA subfamily.

The protein localises to the cell membrane. The catalysed reaction is GTP + H2O = GDP + phosphate + H(+). Functionally, required for accurate and efficient protein synthesis under certain stress conditions. May act as a fidelity factor of the translation reaction, by catalyzing a one-codon backward translocation of tRNAs on improperly translocated ribosomes. Back-translocation proceeds from a post-translocation (POST) complex to a pre-translocation (PRE) complex, thus giving elongation factor G a second chance to translocate the tRNAs correctly. Binds to ribosomes in a GTP-dependent manner. The chain is Elongation factor 4 from Bacillus pumilus (strain SAFR-032).